A 183-amino-acid chain; its full sequence is Protein SHI RELATED SEQUENCE 6 (183 aa).

6 residues coordinate Zn(2+): Cys-41, Cys-44, Cys-52, Cys-57, Cys-61, and Cys-68. The segment at residues 41-68 is a DNA-binding region (zn(2)-C6 fungal-type; degenerate); the sequence is CRDCGNRAKKECLFERCRTCCKSRGYNC. Positions 79 to 88 are enriched in low complexity; the sequence is SSATRSSSSP. The tract at residues 79–121 is disordered; the sequence is SSATRSSSSPSERKKKLKIDKQSSPNVSLLPTTTSRQERGFRE. A compositionally biased stretch (polar residues) spans 100–113; the sequence is QSSPNVSLLPTTTS. The Required for homo- and heterodimerization motif lies at 157-160; sequence ISGH.

Belongs to the SHI protein family.

The protein localises to the nucleus. Its function is as follows. Transcription activator that binds DNA on 5'-ACTCTAC-3' and promotes auxin homeostasis-regulating gene expression (e.g. YUC genes), as well as genes affecting stamen development, cell expansion and timing of flowering. Synergistically with other SHI-related proteins, regulates gynoecium, stamen and leaf development in a dose-dependent manner, controlling apical-basal patterning. Promotes style and stigma formation, and influences vascular development during gynoecium development. May also have a role in the formation and/or maintenance of the shoot apical meristem (SAM). This chain is Protein SHI RELATED SEQUENCE 6 (SRS6), found in Arabidopsis thaliana (Mouse-ear cress).